Reading from the N-terminus, the 323-residue chain is tRNA U34 carboxymethyltransferase (323 aa).

Residues Lys-91, Trp-105, Lys-110, Gly-130, 152 to 154 (DPT), 181 to 182 (IE), Met-196, Tyr-200, and Arg-315 each bind carboxy-S-adenosyl-L-methionine.

Belongs to the class I-like SAM-binding methyltransferase superfamily. CmoB family. In terms of assembly, homotetramer.

It carries out the reaction carboxy-S-adenosyl-L-methionine + 5-hydroxyuridine(34) in tRNA = 5-carboxymethoxyuridine(34) in tRNA + S-adenosyl-L-homocysteine + H(+). Its function is as follows. Catalyzes carboxymethyl transfer from carboxy-S-adenosyl-L-methionine (Cx-SAM) to 5-hydroxyuridine (ho5U) to form 5-carboxymethoxyuridine (cmo5U) at position 34 in tRNAs. The chain is tRNA U34 carboxymethyltransferase from Escherichia coli O139:H28 (strain E24377A / ETEC).